The sequence spans 347 residues: CRISPR-associated endonuclease Cas1 4 (347 aa).

The segment covering 1 to 21 (MNIENEVHIENASESKREPKP) has biased composition (basic and acidic residues). The disordered stretch occupies residues 1 to 25 (MNIENEVHIENASESKREPKPPEGL). Residues Glu-176, His-241, and Glu-256 each contribute to the Mn(2+) site.

It belongs to the CRISPR-associated endonuclease Cas1 family. Homodimer, forms a heterotetramer with a Cas2 homodimer. The cofactor is Mg(2+). Mn(2+) is required as a cofactor.

CRISPR (clustered regularly interspaced short palindromic repeat), is an adaptive immune system that provides protection against mobile genetic elements (viruses, transposable elements and conjugative plasmids). CRISPR clusters contain spacers, sequences complementary to antecedent mobile elements, and target invading nucleic acids. CRISPR clusters are transcribed and processed into CRISPR RNA (crRNA). Acts as a dsDNA endonuclease. Involved in the integration of spacer DNA into the CRISPR cassette. This Methanospirillum hungatei JF-1 (strain ATCC 27890 / DSM 864 / NBRC 100397 / JF-1) protein is CRISPR-associated endonuclease Cas1 4.